A 276-amino-acid chain; its full sequence is Large ribosomal subunit protein uL2 (276 aa).

Disordered stretches follow at residues 30-52 (VKGL…TTSR) and 224-257 (VMNP…KGYK). Residues 41–52 (GGRNNHGRTTSR) show a composition bias toward polar residues.

The protein belongs to the universal ribosomal protein uL2 family. In terms of assembly, part of the 50S ribosomal subunit. Forms a bridge to the 30S subunit in the 70S ribosome.

Functionally, one of the primary rRNA binding proteins. Required for association of the 30S and 50S subunits to form the 70S ribosome, for tRNA binding and peptide bond formation. It has been suggested to have peptidyltransferase activity; this is somewhat controversial. Makes several contacts with the 16S rRNA in the 70S ribosome. The protein is Large ribosomal subunit protein uL2 of Gluconacetobacter diazotrophicus (strain ATCC 49037 / DSM 5601 / CCUG 37298 / CIP 103539 / LMG 7603 / PAl5).